A 129-amino-acid polypeptide reads, in one-letter code: Small ribosomal subunit protein bS6 (129 aa).

Belongs to the bacterial ribosomal protein bS6 family.

Its function is as follows. Binds together with bS18 to 16S ribosomal RNA. The protein is Small ribosomal subunit protein bS6 of Microcystis aeruginosa (strain NIES-843 / IAM M-2473).